The following is a 348-amino-acid chain: Dihydroorotase (348 aa).

Zn(2+)-binding residues include His13 and His15. Substrate-binding positions include 15–17 and Asn41; that span reads HLR. Lys99, His136, and His174 together coordinate Zn(2+). Lys99 carries the post-translational modification N6-carboxylysine. A substrate-binding site is contributed by His136. Position 219 (Leu219) interacts with substrate. A Zn(2+)-binding site is contributed by Asp247. The active site involves Asp247. Residues His251 and Ala263 each contribute to the substrate site.

It belongs to the metallo-dependent hydrolases superfamily. DHOase family. Class II DHOase subfamily. In terms of assembly, homodimer. It depends on Zn(2+) as a cofactor.

It carries out the reaction (S)-dihydroorotate + H2O = N-carbamoyl-L-aspartate + H(+). It functions in the pathway pyrimidine metabolism; UMP biosynthesis via de novo pathway; (S)-dihydroorotate from bicarbonate: step 3/3. Catalyzes the reversible cyclization of carbamoyl aspartate to dihydroorotate. This chain is Dihydroorotase, found in Coxiella burnetii (strain RSA 331 / Henzerling II).